A 185-amino-acid chain; its full sequence is Ribonuclease M5 1 (185 aa).

A Toprim domain is found at 4 to 87 (KEVIVVEGKD…AFLTKHDAAP (84 aa)). Mg(2+) contacts are provided by glutamate 10, aspartate 56, and aspartate 58.

Belongs to the ribonuclease M5 family. The cofactor is Mg(2+).

The protein localises to the cytoplasm. The catalysed reaction is Endonucleolytic cleavage of RNA, removing 21 and 42 nucleotides, respectively, from the 5'- and 3'-termini of a 5S-rRNA precursor.. Required for correct processing of both the 5' and 3' ends of 5S rRNA precursor. Cleaves both sides of a double-stranded region yielding mature 5S rRNA in one step. This chain is Ribonuclease M5 1, found in Ligilactobacillus salivarius (strain UCC118) (Lactobacillus salivarius).